Here is a 423-residue protein sequence, read N- to C-terminus: Diels-Alderase cheD (423 aa).

Residues 1 to 18 (MKLCALFAGAVISTSAVA) form the signal peptide. Asn84 and Asn132 each carry an N-linked (GlcNAc...) asparagine glycan.

Belongs to the Diels-Alderase family.

Its pathway is secondary metabolite biosynthesis. Functionally, diels-Alderase; part of the gene cluster that mediates the biosynthesis of chaetoglobosin A which has a unique inhibitory activity against actin polymerization in mammalian cells. Chaetoglobosin A and its intermediates are involved in the morphological differentiation of C.globosum. The first step of the pathway is the synthesis of prochaetoglobosin I via condensation of one acetyl-CoA, 8 malonyl-CoA, and a L-tryptophan molecule by the PKS-NRPS hybrid synthetase cheA, followed by reduction of backbone double bond to install desired geometry by the enoyl reductase cheB. Further multiple oxidation steps performed by the cytochrome P450 monooxygenases cheE and cheG, as well as by the FAD-linked oxidoreductase cheF, lead to the formation of chaetoglobosin A. Depending on the order of action of these reductases, distinct intermediates can be identified. Within the pathway, the cytochrome P450 monooxygenase cheE catalyzes a stereospecific epoxidation on prochaetoglobosin I, cytoglobosin D, and chaetoglobosin J intermediates. The FAD-linked oxidoreductase cheF performs dehydrogenation of the C-20 hydroxyl groups in the 20-dihyrochaetoglobosin A and cytoglobosin D intermediates. Finally, the cytochrome P450 monooxygenase cheG can catalyze the stereospecific dihydroxylation of prochaetoglobosin I and prochaetoglobosin IV at C-19 and C-20, respectively. The Diels-Alderase cheD may play a role in the post-PKS-NRPS biosynthetic steps catalyzing Diels-Alder cyclization. The chain is Diels-Alderase cheD from Chaetomium globosum (strain ATCC 6205 / CBS 148.51 / DSM 1962 / NBRC 6347 / NRRL 1970) (Soil fungus).